We begin with the raw amino-acid sequence, 168 residues long: HTH-type transcriptional regulator IscR (168 aa).

An HTH rrf2-type domain is found at 2 to 131 (KLTSKGRYAV…NNITLGELMS (130 aa)). The H-T-H motif DNA-binding region spans 28–51 (LADISERQGISLSYLEQLFSKLRK). [2Fe-2S] cluster-binding residues include Cys-92, Cys-98, and Cys-104.

It depends on [2Fe-2S] cluster as a cofactor.

Regulates the transcription of several operons and genes involved in the biogenesis of Fe-S clusters and Fe-S-containing proteins. The sequence is that of HTH-type transcriptional regulator IscR from Vibrio vulnificus (strain CMCP6).